Consider the following 850-residue polypeptide: Elongation factor 2 (850 aa).

The tr-type G domain maps to 17-351 (KNIRNISVIA…QIALKLPSPL (335 aa)). GTP is bound by residues 26–33 (AHVDHGKS), 159–162 (NKLD), and 213–215 (SGL). A Diphthamide modification is found at His707.

This sequence belongs to the TRAFAC class translation factor GTPase superfamily. Classic translation factor GTPase family. EF-G/EF-2 subfamily.

It localises to the cytoplasm. It catalyses the reaction GTP + H2O = GDP + phosphate + H(+). It functions in the pathway protein biosynthesis; polypeptide chain elongation. Catalyzes the GTP-dependent ribosomal translocation step during translation elongation. During this step, the ribosome changes from the pre-translocational (PRE) to the post-translocational (POST) state as the newly formed A-site-bound peptidyl-tRNA and P-site-bound deacylated tRNA move to the P and E sites, respectively. Catalyzes the coordinated movement of the two tRNA molecules, the mRNA and conformational changes in the ribosome. The polypeptide is Elongation factor 2 (EFT1) (Encephalitozoon cuniculi (strain GB-M1) (Microsporidian parasite)).